The following is a 150-amino-acid chain: Aspartate 1-decarboxylase (150 aa).

The active-site Schiff-base intermediate with substrate; via pyruvic acid is serine 24. Serine 24 carries the post-translational modification Pyruvic acid (Ser). Threonine 56 is a binding site for substrate. Tyrosine 57 serves as the catalytic Proton donor. 72–74 provides a ligand contact to substrate; that stretch reads GAA.

The protein belongs to the PanD family. In terms of assembly, heterooctamer of four alpha and four beta subunits. Pyruvate serves as cofactor. In terms of processing, is synthesized initially as an inactive proenzyme, which is activated by self-cleavage at a specific serine bond to produce a beta-subunit with a hydroxyl group at its C-terminus and an alpha-subunit with a pyruvoyl group at its N-terminus.

The protein localises to the cytoplasm. The catalysed reaction is L-aspartate + H(+) = beta-alanine + CO2. Its pathway is cofactor biosynthesis; (R)-pantothenate biosynthesis; beta-alanine from L-aspartate: step 1/1. In terms of biological role, catalyzes the pyruvoyl-dependent decarboxylation of aspartate to produce beta-alanine. The chain is Aspartate 1-decarboxylase from Beijerinckia indica subsp. indica (strain ATCC 9039 / DSM 1715 / NCIMB 8712).